Reading from the N-terminus, the 1073-residue chain is Error-prone DNA polymerase (1073 aa).

The disordered stretch occupies residues E41–G73. Residues P60–G73 show a composition bias toward basic and acidic residues.

The protein belongs to the DNA polymerase type-C family. DnaE2 subfamily.

It localises to the cytoplasm. It carries out the reaction DNA(n) + a 2'-deoxyribonucleoside 5'-triphosphate = DNA(n+1) + diphosphate. Functionally, DNA polymerase involved in damage-induced mutagenesis and translesion synthesis (TLS). It is not the major replicative DNA polymerase. The chain is Error-prone DNA polymerase from Corynebacterium efficiens (strain DSM 44549 / YS-314 / AJ 12310 / JCM 11189 / NBRC 100395).